A 534-amino-acid polypeptide reads, in one-letter code: Peptide chain release factor 3 (534 aa).

The region spanning 9–278 (ARRRTFAIIS…FFVEHAPSPQ (270 aa)) is the tr-type G domain. GTP is bound by residues 18–25 (SHPDAGKT), 86–90 (DTPGH), and 140–143 (NKLD).

The protein belongs to the TRAFAC class translation factor GTPase superfamily. Classic translation factor GTPase family. PrfC subfamily.

The protein resides in the cytoplasm. In terms of biological role, increases the formation of ribosomal termination complexes and stimulates activities of RF-1 and RF-2. It binds guanine nucleotides and has strong preference for UGA stop codons. It may interact directly with the ribosome. The stimulation of RF-1 and RF-2 is significantly reduced by GTP and GDP, but not by GMP. The polypeptide is Peptide chain release factor 3 (Xylella fastidiosa (strain M12)).